Here is a 283-residue protein sequence, read N- to C-terminus: Gap junction beta-1 protein (283 aa).

Topologically, residues methionine 1–arginine 22 are cytoplasmic. Residues valine 23–glycine 45 form a helical membrane-spanning segment. Residues aspartate 46–arginine 75 are Extracellular-facing. Residues leucine 76 to valine 95 traverse the membrane as a helical segment. Topologically, residues alanine 96–threonine 130 are cytoplasmic. A helical transmembrane segment spans residues leucine 131–phenylalanine 153. Residues tyrosine 154–threonine 191 are Extracellular-facing. The helical transmembrane segment at valine 192 to isoleucine 214 threads the bilayer. The Cytoplasmic segment spans residues arginine 215 to cysteine 283. Phosphoserine occurs at positions 233, 258, 266, and 277.

It belongs to the connexin family. Beta-type (group I) subfamily. As to quaternary structure, a connexon is composed of a hexamer of connexins. Interacts with CNST.

Its subcellular location is the cell membrane. It localises to the cell junction. The protein localises to the gap junction. Its function is as follows. One gap junction consists of a cluster of closely packed pairs of transmembrane channels, the connexons, through which materials of low MW diffuse from one cell to a neighboring cell. The polypeptide is Gap junction beta-1 protein (Gjb1) (Mus musculus (Mouse)).